A 165-amino-acid polypeptide reads, in one-letter code: LOB domain-containing protein 3 (165 aa).

In terms of domain architecture, LOB spans 13–115; it reads SPCAGCKLLR…TQLAFAQAEL (103 aa).

The protein belongs to the LOB domain-containing protein family. In terms of tissue distribution, expressed in young shoots, roots, stems, leaves and flowers. At the bases of lateral organs formed from vegetative, inflorescence, and floral meristems.

The protein resides in the nucleus. The chain is LOB domain-containing protein 3 (LBD3) from Arabidopsis thaliana (Mouse-ear cress).